A 314-amino-acid chain; its full sequence is tRNA-cytidine(32) 2-sulfurtransferase (314 aa).

Residues 49–54 (SGGKDS) carry the PP-loop motif motif. Positions 124, 127, and 215 each coordinate [4Fe-4S] cluster.

Belongs to the TtcA family. Homodimer. The cofactor is Mg(2+). [4Fe-4S] cluster serves as cofactor.

The protein localises to the cytoplasm. The catalysed reaction is cytidine(32) in tRNA + S-sulfanyl-L-cysteinyl-[cysteine desulfurase] + AH2 + ATP = 2-thiocytidine(32) in tRNA + L-cysteinyl-[cysteine desulfurase] + A + AMP + diphosphate + H(+). It participates in tRNA modification. Catalyzes the ATP-dependent 2-thiolation of cytidine in position 32 of tRNA, to form 2-thiocytidine (s(2)C32). The sulfur atoms are provided by the cysteine/cysteine desulfurase (IscS) system. This chain is tRNA-cytidine(32) 2-sulfurtransferase, found in Histophilus somni (strain 2336) (Haemophilus somnus).